Here is a 92-residue protein sequence, read N- to C-terminus: PqqA binding protein (92 aa).

The protein belongs to the PqqD family. As to quaternary structure, monomer. Interacts with PqqE.

It functions in the pathway cofactor biosynthesis; pyrroloquinoline quinone biosynthesis. Its function is as follows. Functions as a PqqA binding protein and presents PqqA to PqqE, in the pyrroloquinoline quinone (PQQ) biosynthetic pathway. This Xanthomonas oryzae pv. oryzae (strain MAFF 311018) protein is PqqA binding protein.